A 137-amino-acid polypeptide reads, in one-letter code: Thioredoxin-like protein R548 (137 aa).

The Thioredoxin domain maps to 2 to 137 (SKDSVETNTI…LEKSIVESSQ (136 aa)). Catalysis depends on nucleophile residues Cys-61 and Cys-64. A disulfide bond links Cys-61 and Cys-64.

The protein belongs to the thioredoxin family.

Its function is as follows. Participates in various redox reactions through the reversible oxidation of its active center dithiol to a disulfide and catalyzes dithiol-disulfide exchange reactions. The protein is Thioredoxin-like protein R548 of Acanthamoeba polyphaga mimivirus (APMV).